The sequence spans 396 residues: MAAAVDTFLFTSESVNEGHPDKLCDQISDAVLDACLAQDPESKVACETCTKTNLVMVFGEITTKANVDYEKIVRQTCRDIGFVSADVGLDADNCKVLVYIEQQSPDIAQGVHGHLTRRPEEIGAGDQGHMFGYATDETPELMPLSHVLATKLGARLTEVRKNGTCPWLRPDGKTQVTVEYYNENGAMVPIRVHTVLISTQHDETVTNDEIAADLKEHVIKPVIPEKYLDEKTIFHLNPSGRFVIGGPHGDAGLTGRKIIIDTYGGWGAHGGGAFSGKDPTKVDRSGAYIARQAAKSIVAAGLARRCIVQISYAIGVPEPLSVFVDTYGTGKIPDKEILKIVKETFDFRPGMIAINLDLLKGGSRYLKTAAYGHFGRDDADFTWETVKPLKWEKPQA.

Glutamate 13 contacts Mg(2+). Residue histidine 19 coordinates ATP. Residue glutamate 47 participates in K(+) binding. L-methionine is bound by residues glutamate 60 and glutamine 103. Residues 171–173 (DGK), 239–242 (SGRF), aspartate 250, 256–257 (RK), alanine 273, lysine 277, and lysine 281 contribute to the ATP site. Residue aspartate 250 coordinates L-methionine. Position 281 (lysine 281) interacts with L-methionine.

Belongs to the AdoMet synthase family. As to quaternary structure, homotetramer. Mn(2+) is required as a cofactor. The cofactor is Mg(2+). It depends on Co(2+) as a cofactor. Requires K(+) as cofactor. As to expression, expressed in roots, stems and leaves (at protein level).

It is found in the cytoplasm. The catalysed reaction is L-methionine + ATP + H2O = S-adenosyl-L-methionine + phosphate + diphosphate. It participates in amino-acid biosynthesis; S-adenosyl-L-methionine biosynthesis; S-adenosyl-L-methionine from L-methionine: step 1/1. Functionally, catalyzes the formation of S-adenosylmethionine from methionine and ATP. The reaction comprises two steps that are both catalyzed by the same enzyme: formation of S-adenosylmethionine (AdoMet) and triphosphate, and subsequent hydrolysis of the triphosphate. May be involved in the synthesis of betain in response to abiotic stress such as high salinity. The protein is S-adenosylmethionine synthase 4 (SAMS4) of Atriplex nummularia (Old man saltbush).